The following is a 664-amino-acid chain: DNA primase (664 aa).

The segment at 40–64 (CPFHKEKTPSFTVSPDKQFYYCFGC) adopts a CHC2-type zinc-finger fold. The span at 94–104 (GMDVPREERGG) shows a compositional bias: basic and acidic residues. The segment at 94–115 (GMDVPREERGGRGHTPRQPTDS) is disordered. The 83-residue stretch at 262–344 (DEIMVVEGYM…GKRVRFLFLP (83 aa)) folds into the Toprim domain. Mg(2+) contacts are provided by Glu268, Asp312, and Asp314. A disordered region spans residues 483–521 (PRKSWNKDKKPWDGKKWDGKKKWDKGGRGDFKAPQRTPV). Basic and acidic residues predominate over residues 487 to 515 (WNKDKKPWDGKKWDGKKKWDKGGRGDFKA).

This sequence belongs to the DnaG primase family. As to quaternary structure, monomer. Interacts with DnaB. It depends on Zn(2+) as a cofactor. Mg(2+) is required as a cofactor.

It carries out the reaction ssDNA + n NTP = ssDNA/pppN(pN)n-1 hybrid + (n-1) diphosphate.. Its function is as follows. RNA polymerase that catalyzes the synthesis of short RNA molecules used as primers for DNA polymerase during DNA replication. The protein is DNA primase of Pseudomonas aeruginosa (strain ATCC 15692 / DSM 22644 / CIP 104116 / JCM 14847 / LMG 12228 / 1C / PRS 101 / PAO1).